We begin with the raw amino-acid sequence, 415 residues long: uncharacterized protein (415 aa).

Positions Ser179–Pro199 are enriched in pro residues. The interval Ser179 to Ala200 is disordered.

This sequence belongs to the herpesviridae BTRF1 family.

This is an uncharacterized protein from Equus caballus (Horse).